We begin with the raw amino-acid sequence, 55 residues long: MSRGVSVEGDLEKALKKFKRISNETKKDSKRHEYYLSPRIRRKEKIKEANKYRSF.

Belongs to the bacterial ribosomal protein bS21 family.

The protein is Small ribosomal subunit protein bS21 of Ureaplasma parvum serovar 3 (strain ATCC 27815 / 27 / NCTC 11736).